The following is a 382-amino-acid chain: Alkanesulfonate monooxygenase (382 aa).

Belongs to the SsuD family.

It carries out the reaction an alkanesulfonate + FMNH2 + O2 = an aldehyde + FMN + sulfite + H2O + 2 H(+). In terms of biological role, catalyzes the desulfonation of aliphatic sulfonates. The sequence is that of Alkanesulfonate monooxygenase from Pseudomonas putida (strain W619).